A 234-amino-acid polypeptide reads, in one-letter code: Ribonuclease HII (234 aa).

One can recognise an RNase H type-2 domain in the interval 16-207 (ALVAGVDEAG…VRRMLTPKAI (192 aa)). Residues Asp22, Glu23, and Asp115 each coordinate a divalent metal cation.

This sequence belongs to the RNase HII family. Mn(2+) serves as cofactor. It depends on Mg(2+) as a cofactor.

It localises to the cytoplasm. It catalyses the reaction Endonucleolytic cleavage to 5'-phosphomonoester.. Its function is as follows. Endonuclease that specifically degrades the RNA of RNA-DNA hybrids. This Xylella fastidiosa (strain M12) protein is Ribonuclease HII.